The following is a 716-amino-acid chain: Protein C-mannosyl-transferase DPY19L3 (716 aa).

Topologically, residues 1–43 (MMSIRQRREIRATEVSEDFPAQEENVKLENKLPSGCTSRRLWK) are cytoplasmic. Residues 44-64 (ILSLTIGGTIALCIGLLTSVY) form a helical membrane-spanning segment. Topologically, residues 65–154 (LATLHENDLW…RVLPVQKYLE (90 aa)) are lumenal. N-linked (GlcNAc...) asparagine glycosylation occurs at Asn-118. A helical transmembrane segment spans residues 155 to 182 (PVYFYIYTLFGLQAIYVTALYITSWLLS). At 183–184 (GT) the chain is on the cytoplasmic side. Residues 185-197 (WLSGLLAAFWYVT) constitute an intramembrane region (name=3). Topologically, residues 198-215 (NRIDTTRVEFTIPLRENW) are cytoplasmic. The name=4 intramembrane region spans 216–230 (ALPFFAIQIAAITYF). At 231–239 (LRPNLQPLS) the chain is on the cytoplasmic side. The helical transmembrane segment at 240 to 256 (ERLTLLAIFISTFLFSL) threads the bilayer. Residues 257-262 (TWQFNQ) lie on the Lumenal side of the membrane. The chain crosses the membrane as a helical span at residues 263-279 (FMMLMQALVLFTLDSLD). Residues 280–289 (MLPAVKATWL) are Cytoplasmic-facing. The chain crosses the membrane as a helical span at residues 290-306 (YGIQITSLLLVCILQFF). Over 307–308 (NS) the chain is Lumenal. Residues 309 to 323 (MILGSLLISFNLSVF) form a helical membrane-spanning segment. At 324 to 338 (IARKLQKNLKTGSFL) the chain is on the cytoplasmic side. Residues 339 to 359 (NRLGKLLLHLFMVLCLTLFLN) traverse the membrane as a helical segment. Residues 360 to 414 (NIIKKILNLKSDEHIFKFLKAKFGLGATRDFDANLYLCEEAFGLLPFNTFGRLSD) are Lumenal-facing. Residues 415–437 (TLLFYAYIFVLSITVIVAFVVAF) form a helical membrane-spanning segment. The Cytoplasmic portion of the chain corresponds to 438 to 465 (HNLSDSTNQQSVGKMEKGTVDLKPETAY). Residues 466-485 (NLIHTILFGFLALSTMRMKY) form a helical membrane-spanning segment. Residues 486-487 (LW) are Lumenal-facing. A helical membrane pass occupies residues 488 to 499 (TSHMCVFASFGL). The Cytoplasmic portion of the chain corresponds to 500 to 522 (CSPEIWELLLKSVHLYNPKRICI). Residues 523 to 539 (MRYSVPILILLYLCYKF) form a helical membrane-spanning segment. The Lumenal segment spans residues 540-716 (WPGMMDELSE…FHVYKLSRNK (177 aa)). A glycan (N-linked (GlcNAc...) asparagine) is linked at Asn-704.

This sequence belongs to the dpy-19 family.

It localises to the endoplasmic reticulum membrane. The catalysed reaction is L-tryptophyl-[protein] + a di-trans,poly-cis-dolichyl beta-D-mannosyl phosphate = C-alpha-D-mannosyl-L-tryptophyl-[protein] + a di-trans,poly-cis-dolichyl phosphate + H(+). It functions in the pathway protein modification; protein glycosylation. In terms of biological role, C-mannosyltransferase that mediates C-mannosylation of tryptophan residues on target proteins. The reaction occurs on the luminal side of the endoplasmic reticulum and involves the transfer of a mannose unit from a dolichylphosphate mannose (Dol-P-Man) donor to an acceptor protein containing a WxxW or WxxC consensus sequence. C-mannosylates RSPO1, a Wnt signaling regulator, preferentially at the first Trp residue in the sequence WxxW. C-mannosylates the netrin receptor UNC5A, preferentially at the third tryptophan of WxxWxxWxxC sequence. This chain is Protein C-mannosyl-transferase DPY19L3 (DPY19L3), found in Pongo abelii (Sumatran orangutan).